The chain runs to 298 residues: 2-dehydro-3-deoxy-D-arabinonate dehydratase (298 aa).

Residue I86 participates in substrate binding. Mg(2+) contacts are provided by E148, E150, and D169. Substrate contacts are provided by K187 and T261.

It belongs to the FAH family. As to quaternary structure, homotetramer. It depends on Mg(2+) as a cofactor. The cofactor is Ca(2+).

It carries out the reaction 2-dehydro-3-deoxy-D-arabinonate = 2,5-dioxopentanoate + H2O. Its function is as follows. Participates in a pentose oxidation pathway that converts D-arabinonate to 2-oxoglutarate. This Saccharolobus solfataricus (strain ATCC 35092 / DSM 1617 / JCM 11322 / P2) (Sulfolobus solfataricus) protein is 2-dehydro-3-deoxy-D-arabinonate dehydratase.